The following is a 447-amino-acid chain: Phosphoglucosamine mutase (447 aa).

S106 serves as the catalytic Phosphoserine intermediate. Mg(2+) is bound by residues S106, D245, D247, and D249. A Phosphoserine modification is found at S106.

This sequence belongs to the phosphohexose mutase family. Mg(2+) serves as cofactor. Post-translationally, activated by phosphorylation.

The catalysed reaction is alpha-D-glucosamine 1-phosphate = D-glucosamine 6-phosphate. In terms of biological role, catalyzes the conversion of glucosamine-6-phosphate to glucosamine-1-phosphate. This Cupriavidus pinatubonensis (strain JMP 134 / LMG 1197) (Cupriavidus necator (strain JMP 134)) protein is Phosphoglucosamine mutase.